Reading from the N-terminus, the 231-residue chain is DNA mismatch repair protein MutH (231 aa).

This sequence belongs to the MutH family.

The protein localises to the cytoplasm. In terms of biological role, sequence-specific endonuclease that cleaves unmethylated GATC sequences. It is involved in DNA mismatch repair. The protein is DNA mismatch repair protein MutH of Shewanella woodyi (strain ATCC 51908 / MS32).